The sequence spans 551 residues: Alkaline nuclease (551 aa).

Belongs to the herpesviridae alkaline nuclease family. Interacts with major DNA-binding protein; this interaction increases the nuclease processivity of the alkaline exonuclease.

Its subcellular location is the host nucleus. It is found in the host cytoplasm. In terms of biological role, plays a role in processing non linear or branched viral DNA intermediates in order to promote the production of mature packaged unit-length linear progeny viral DNA molecules. Exhibits endonuclease and exonuclease activities and accepts both double-stranded and single-stranded DNA as substrate. Exonuclease digestion of DNA is in the 5'-&gt; 3' direction and the products are 5'-monophosphate nucleosides. Additionally, forms a recombinase with the major DNA-binding protein, which displays strand exchange activity. The protein is Alkaline nuclease of Homo sapiens (Human).